The sequence spans 437 residues: Succinate--CoA ligase [ADP-forming] subunit beta, hydrogenosomal (437 aa).

The transit peptide at 1 to 27 (MLANVTRSTSKAAPALASIAQTAQKRF) directs the protein to the hydrogenosome. The region spanning 36-278 (MNLLHEYNVN…TTQEDPREVA (243 aa)) is the ATP-grasp domain. ATP-binding positions include Lys-73, 80-82 (GRG), and Glu-141. Positions 233 and 247 each coordinate Mg(2+). Substrate is bound by residues Asn-299 and 356–358 (GIM).

It belongs to the succinate/malate CoA ligase beta subunit family. Heterodimer of an alpha and a beta subunit. It depends on Mg(2+) as a cofactor.

The protein resides in the hydrogenosome. It catalyses the reaction succinate + ATP + CoA = succinyl-CoA + ADP + phosphate. It participates in carbohydrate metabolism; tricarboxylic acid cycle; succinate from succinyl-CoA (ligase route): step 1/1. Functionally, succinyl-CoA synthetase functions in the citric acid cycle (TCA), coupling the hydrolysis of succinyl-CoA to the synthesis of ATP and thus represents the only step of substrate-level phosphorylation in the TCA. The beta subunit provides nucleotide specificity of the enzyme and binds the substrate succinate, while the binding sites for coenzyme A and phosphate are found in the alpha subunit. The sequence is that of Succinate--CoA ligase [ADP-forming] subunit beta, hydrogenosomal from Neocallimastix frontalis (Rumen fungus).